The chain runs to 384 residues: Probable 2-heptyl-3-hydroxy-4(1H)-quinolone synthase AqdB2 (384 aa).

Belongs to the 3-hydroxybenzoate 6-hydroxylase family.

It carries out the reaction 2-heptyl-4(1H)-quinolone + NADH + O2 + H(+) = 2-heptyl-3-hydroxy-4(1H)-quinolone + NAD(+) + H2O. In terms of biological role, involved in the degradation of the Pseudomonas aeruginosa quorum sensing signal molecule HHQ (2-heptyl-4-quinolone) to anthranilic acid. Probably catalyzes the hydroxylation of HHQ to PQS (2-heptyl-3-hydroxy-4-quinolone). The sequence is that of Probable 2-heptyl-3-hydroxy-4(1H)-quinolone synthase AqdB2 from Rhodococcus erythropolis (Arthrobacter picolinophilus).